Here is a 133-residue protein sequence, read N- to C-terminus: Homeobox protein BarH-like 2 (133 aa).

Positions Glu-1 to Val-46 form a DNA-binding region, homeobox. The tract at residues Met-45–Ser-133 is disordered.

It belongs to the BAR homeobox family. In terms of tissue distribution, expressed in keratinizing epithelia such as wool follicle, tongue and esophagus. Expressed at low level in thymus. Not detected in spleen, skeletal muscle, brain, heart kidney, liver and lung.

The protein localises to the nucleus. Transcription factor. Binds optimally to the DNA consensus sequence 5'-YYTAATGRTTTTY-3'. May control the expression of neural adhesion molecules such as L1 or Ng-CAM during embryonic development of both the central and peripherical nervous system. May be involved in controlling adhesive processes in keratinizing epithelia. The sequence is that of Homeobox protein BarH-like 2 (BARX2) from Ovis aries (Sheep).